We begin with the raw amino-acid sequence, 260 residues long: MICOS complex subunit mic25-a (260 aa).

The tract at residues 1 to 92 (MGGSESTGRK…KPTARGVGHQ (92 aa)) is disordered. Residue G2 is the site of N-myristoyl glycine attachment. Positions 28 to 39 (RLSDEVVNRMKD) are enriched in basic and acidic residues. Low complexity predominate over residues 48–64 (STSTASGTTSGPTTFPS). Residues 94–187 (AEEDLYRRYE…LNSIEKKNLE (94 aa)) adopt a coiled-coil conformation. The CHCH domain occupies 213-255 (DPVCMDLQSNILKCYAENKQERLNCSDLAKEYGKCVSAAQKNL). 2 consecutive short sequence motifs (cx9C motif) follow at residues 216 to 226 (CMDLQSNILKC) and 237 to 247 (CSDLAKEYGKC). Disulfide bonds link C216–C247 and C226–C237.

This sequence belongs to the MICOS complex subunit Mic19 family. Metazoan Mic25 subfamily. In terms of assembly, component of the mitochondrial contact site and cristae organizing system (MICOS) complex (also known as MINOS or MitOS complex).

It is found in the mitochondrion inner membrane. Its function is as follows. Component of the MICOS complex, a large protein complex of the mitochondrial inner membrane that plays crucial roles in the maintenance of crista junctions, inner membrane architecture, and formation of contact sites to the outer membrane. This is MICOS complex subunit mic25-a (chchd6-a) from Xenopus laevis (African clawed frog).